A 494-amino-acid polypeptide reads, in one-letter code: MGSTSSLYAAIDLGSNSFHMLVVREVAGSIQTLTRIKRKVRLAAGLNSENALSNEAMERGWQCLRLFAERLQDIPPSQIRVVATATLRLAVNAGDFIAKAQEILGCPVQVISGEEEARLIYQGVAHTTGGADQRLVVDIGGASTELVTGTGAQTTSLFSLSMGCVTWLERYFADRNLGQENFDAAEKAAREVLRPVADELRYHGWKVCVGASGTVQALQEIMMAQGMDERITLEKLQQLKQRAIHCGRLEELEIDGLTLERALVFPSGLAILIAIFTELNIQCMTLAGGALREGLVYGMLHLTVEQDIRSRTLRNIQRRFMIDIDQAQRVAKVAANFFDQVENEWHLEAISRDLLISACQLHEIGLSVDFKQAPQHAAYLVRNLDLPGFTPAQKKLLATLLLNQTNPVDLSSLHQQNAVPPRVAEQLCRLLRLAIIFASRRRDDLVPEMTLQANHELLTLTLPQGWLTQHPLGKEIIDQESQWQSYVHWPLEVH.

Belongs to the GppA/Ppx family. GppA subfamily.

It carries out the reaction guanosine 3'-diphosphate 5'-triphosphate + H2O = guanosine 3',5'-bis(diphosphate) + phosphate + H(+). It functions in the pathway purine metabolism; ppGpp biosynthesis; ppGpp from GTP: step 2/2. Functionally, catalyzes the conversion of pppGpp to ppGpp. Guanosine pentaphosphate (pppGpp) is a cytoplasmic signaling molecule which together with ppGpp controls the 'stringent response', an adaptive process that allows bacteria to respond to amino acid starvation, resulting in the coordinated regulation of numerous cellular activities. The sequence is that of Guanosine-5'-triphosphate,3'-diphosphate pyrophosphatase from Escherichia coli O127:H6 (strain E2348/69 / EPEC).